Here is a 560-residue protein sequence, read N- to C-terminus: Nucleoprotein (560 aa).

Residues 53–236 (MRKDKRTDTD…ITQEQSQINV (184 aa)) form a binding site for the cap structure m7GTP region. Residues 333–353 (LTDTGSPNHPPVRNGGSPRLS) form a disordered region. Mn(2+)-binding residues include Asp-379 and Glu-381. Residues Glu-389, Cys-496, His-499, and Cys-520 each contribute to the Zn(2+) site. Position 524 (Asp-524) interacts with Mn(2+).

The protein belongs to the arenaviridae nucleocapsid protein family. In terms of assembly, homomultimerizes to form the nucleocapsid. Binds to viral genomic RNA. Interacts with glycoprotein G2. Interacts with protein Z; this interaction probably directs the encapsidated genome to budding sites. Interacts with protein L; this interaction does not interfere with Z-L interaction. Interacts with host IKBKE (via Protein kinase domain); the interaction inhibits IKBKE kinase activity.

The protein localises to the virion. It is found in the host cytoplasm. Its function is as follows. Encapsidates the genome, protecting it from nucleases. The encapsidated genomic RNA is termed the nucleocapsid (NC). Serves as template for viral transcription and replication. The increased presence of protein N in host cell does not seem to trigger the switch from transcription to replication as observed in other negative strain RNA viruses. Through the interaction with host IKBKE, strongly inhibits the phosphorylation and nuclear translocation of host IRF3, a protein involved in interferon activation pathway, leading to the inhibition of interferon-beta and IRF3-dependent promoters activation. Also encodes a functional 3'-5' exoribonuclease that degrades preferentially dsRNA substrates and thereby participates in the suppression of interferon induction. In Pirital mammarenavirus (isolate Rat/Venezuela/VAV-488/1995) (PIRV), this protein is Nucleoprotein.